The primary structure comprises 1008 residues: Serine/threonine-protein kinase PRP4 homolog (1008 aa).

Residues 1–103 (MAAAEAPSLR…PAKRTKLDDL (103 aa)) form a disordered region. A2 carries the post-translational modification N-acetylalanine. 4 positions are modified to phosphoserine: S8, S20, S23, and S32. Basic residues-rich tracts occupy residues 39–59 (KHSR…KHKH) and 67–81 (RKHK…HKRK). A compositionally biased stretch (basic and acidic residues) spans 82 to 91 (EVADASDKEG). Phosphoserine is present on residues S87 and S93. The residue at position 99 (K99) is an N6-acetyllysine; alternate. A Glycyl lysine isopeptide (Lys-Gly) (interchain with G-Cter in SUMO2); alternate cross-link involves residue K99. Residue K111 forms a Glycyl lysine isopeptide (Lys-Gly) (interchain with G-Cter in SUMO2) linkage. A Glycyl lysine isopeptide (Lys-Gly) (interchain with G-Cter in SUMO2); alternate cross-link involves residue K117. Residue K117 forms a Glycyl lysine isopeptide (Lys-Gly) (interchain with G-Cter in SUMO1); alternate linkage. A Phosphoserine modification is found at S131. Residue Y140 is modified to Phosphotyrosine. Disordered stretches follow at residues 140–536 (YESG…EDEE) and 560–584 (SNLS…SPDD). 3 positions are modified to phosphoserine: S142, S144, and S166. The span at 157 to 168 (GNRSSTRSSSTK) shows a compositional bias: low complexity. Glycyl lysine isopeptide (Lys-Gly) (interchain with G-Cter in SUMO2) cross-links involve residues K170 and K177. Basic residues-rich tracts occupy residues 179 to 202 (STKK…KKSK) and 214 to 230 (RSKS…SKRS). 7 positions are modified to phosphoserine: S239, S241, S257, S277, S283, S292, and S294. The span at 247-270 (RSQEKVGKARSPVDDKAKVEDKSK) shows a compositional bias: basic and acidic residues. Basic residues predominate over residues 302-315 (SKDRRSRSKERKSK). Residues 316–325 (RPEADKEKKP) show a composition bias toward basic and acidic residues. Phosphoserine is present on residues S328, S354, S356, S366, and S368. Positions 342–367 (PSRRPGRSPKRRSLSPKQRDKSRRSR) are enriched in basic residues. The residue at position 385 (T385) is a Phosphothreonine. Position 387 is a phosphoserine (S387). Basic and acidic residues-rich tracts occupy residues 395–408 (RSLE…ERRR) and 415–429 (RPRD…RSKD). S427, S431, and S437 each carry phosphoserine. A compositionally biased stretch (basic residues) spans 438-498 (PARRRASRSP…RGGRRRRSRS (61 aa)). 8 positions are modified to phosphoserine: S519, S520, S521, S566, S570, S577, S579, and S581. Positions 519–536 (SSSDDNLEDFDVEEEDEE) are enriched in acidic residues. The span at 563 to 582 (SVPSEPSSPQSSTRSRSPSP) shows a compositional bias: low complexity. Glycyl lysine isopeptide (Lys-Gly) (interchain with G-Cter in SUMO2) cross-links involve residues K594 and K660. One can recognise a Protein kinase domain in the interval 688–1004 (YNVYGYTGQG…INQALQHAFI (317 aa)). Residues 694–702 (TGQGVFSNV) and K718 contribute to the ATP site. K718 bears the N6-acetyllysine mark. The active-site Proton acceptor is the D816. Y850 is modified (phosphotyrosine). S853 bears the Phosphoserine mark.

This sequence belongs to the protein kinase superfamily. CMGC Ser/Thr protein kinase family. Interacts with CLK1 C-terminus. Associates with the U5 snRNP and NCOR1 deacetylase complexes. Identified in the spliceosome C complex. In terms of processing, phosphorylated by CLK1. Autophosphorylated; phosphorylation inhibits interaction with its targets, such as PRPF6 or SMARCA4.

It localises to the nucleus. Its subcellular location is the chromosome. It is found in the centromere. The protein resides in the kinetochore. It catalyses the reaction L-seryl-[protein] + ATP = O-phospho-L-seryl-[protein] + ADP + H(+). It carries out the reaction L-threonyl-[protein] + ATP = O-phospho-L-threonyl-[protein] + ADP + H(+). Functionally, serine/threonine kinase involved in spliceosomal assembly as well as mitosis and signaling regulation. Connects chromatin mediated regulation of transcription and pre-mRNA splicing. During spliceosomal assembly, interacts with and phosphorylates PRPF6 and PRPF31, components of the U4/U6-U5 tri-small nuclear ribonucleoprotein (snRNP), to facilitate the formation of the spliceosome B complex. Plays a role in regulating transcription and the spindle assembly checkpoint (SAC). Associates with U5 snRNP and NCOR1 deacetylase complexes which may allow a coordination of pre-mRNA splicing with chromatin remodeling events involved in transcriptional regulation. Associates and probably phosphorylates SMARCA4 and NCOR1. Phosphorylates SRSF1. Associates with kinetochores during mitosis and is necessary for recruitment and maintenance of the checkpoint proteins such as MAD1L1 and MAD12L1 at the kinetochores. Phosphorylates and regulates the activity of the transcription factors such as ELK1 and KLF13. Phosphorylates nuclear YAP1 and WWTR1/TAZ which induces nuclear exclusion and regulates Hippo signaling pathway, involved in tissue growth control. The protein is Serine/threonine-protein kinase PRP4 homolog (PRP4K) of Bos taurus (Bovine).